The sequence spans 415 residues: F-box protein At3g13820 (415 aa).

The F-box domain maps to 1-50 (MTTMSNLPAEVLEEILSRTPVTSLRTMRSTCKKWNNLSKKKIIPEAARKQ). Disordered stretches follow at residues 209-229 (NDYD…EDDD) and 387-415 (KQPK…KIIG). Positions 210–229 (DYDDQEDEEEEDDEEYEDDD) are enriched in acidic residues. The span at 403–415 (NKNKKGRKIKIIG) shows a compositional bias: basic residues.

In Arabidopsis thaliana (Mouse-ear cress), this protein is F-box protein At3g13820.